The following is a 181-amino-acid chain: Protein Syd (181 aa).

This sequence belongs to the Syd family.

Its subcellular location is the cell inner membrane. Functionally, interacts with the SecY protein in vivo. May bind preferentially to an uncomplexed state of SecY, thus functioning either as a chelating agent for excess SecY in the cell or as a regulatory factor that negatively controls the translocase function. The chain is Protein Syd from Cronobacter sakazakii (strain ATCC BAA-894) (Enterobacter sakazakii).